The primary structure comprises 294 residues: MSNLKEIKRKIKSVHNTQKTTNAMKLVSTAKLKKTEEAAKRSKIYAQKIDEILSEISFQINKIVHNEDDMRLSLFHKKEQIKTVDLIFITADKGLCGGFNIKTLKTVSEMLKEYEAKNINIRLRAIGKTGIEYFNFQKIELLEKYFHLSSSPDYEKACEVIHAAVDDFLNGNTDEVILVHNGYKNMITQELKINHLIPVEPKSIEQTHNSLLELEPEGIELLEDLMKTYFEYNMYYALIDSLAAEHSARMQAMDNATNNAKARVKQLNLAYNKARQESITTELIEIISGVESMK.

The protein belongs to the ATPase gamma chain family. As to quaternary structure, F-type ATPases have 2 components, CF(1) - the catalytic core - and CF(0) - the membrane proton channel. CF(1) has five subunits: alpha(3), beta(3), gamma(1), delta(1), epsilon(1). CF(0) has three main subunits: a, b and c.

It localises to the cell inner membrane. Produces ATP from ADP in the presence of a proton gradient across the membrane. The gamma chain is believed to be important in regulating ATPase activity and the flow of protons through the CF(0) complex. The chain is ATP synthase gamma chain from Campylobacter jejuni subsp. doylei (strain ATCC BAA-1458 / RM4099 / 269.97).